We begin with the raw amino-acid sequence, 357 residues long: UDP-N-acetylglucosamine--N-acetylmuramyl-(pentapeptide) pyrophosphoryl-undecaprenol N-acetylglucosamine transferase (357 aa).

UDP-N-acetyl-alpha-D-glucosamine contacts are provided by residues 14 to 16 (TGG), Asn-120, Arg-164, Ser-194, and Gln-291.

The protein belongs to the glycosyltransferase 28 family. MurG subfamily.

It is found in the cell inner membrane. It carries out the reaction di-trans,octa-cis-undecaprenyl diphospho-N-acetyl-alpha-D-muramoyl-L-alanyl-D-glutamyl-meso-2,6-diaminopimeloyl-D-alanyl-D-alanine + UDP-N-acetyl-alpha-D-glucosamine = di-trans,octa-cis-undecaprenyl diphospho-[N-acetyl-alpha-D-glucosaminyl-(1-&gt;4)]-N-acetyl-alpha-D-muramoyl-L-alanyl-D-glutamyl-meso-2,6-diaminopimeloyl-D-alanyl-D-alanine + UDP + H(+). It functions in the pathway cell wall biogenesis; peptidoglycan biosynthesis. In terms of biological role, cell wall formation. Catalyzes the transfer of a GlcNAc subunit on undecaprenyl-pyrophosphoryl-MurNAc-pentapeptide (lipid intermediate I) to form undecaprenyl-pyrophosphoryl-MurNAc-(pentapeptide)GlcNAc (lipid intermediate II). This Fusobacterium nucleatum subsp. nucleatum (strain ATCC 25586 / DSM 15643 / BCRC 10681 / CIP 101130 / JCM 8532 / KCTC 2640 / LMG 13131 / VPI 4355) protein is UDP-N-acetylglucosamine--N-acetylmuramyl-(pentapeptide) pyrophosphoryl-undecaprenol N-acetylglucosamine transferase.